The following is a 234-amino-acid chain: Small ribosomal subunit protein uS3 (234 aa).

The region spanning 39 to 107 (IRKYVKKELY…EIAVNIKEER (69 aa)) is the KH type-2 domain. Residues 213-222 (PTEKAEETTS) are compositionally biased toward basic and acidic residues. The segment at 213 to 234 (PTEKAEETTSKPKRRPAKKRGK) is disordered. Basic residues predominate over residues 223–234 (KPKRRPAKKRGK).

Belongs to the universal ribosomal protein uS3 family. In terms of assembly, part of the 30S ribosomal subunit. Forms a tight complex with proteins S10 and S14.

In terms of biological role, binds the lower part of the 30S subunit head. Binds mRNA in the 70S ribosome, positioning it for translation. The protein is Small ribosomal subunit protein uS3 of Aliarcobacter butzleri (strain RM4018) (Arcobacter butzleri).